The chain runs to 443 residues: MRGFSNEIILKRTLTLSDFTLRYHKRGITALQVIKAPSVSNVPVLLSGDNYGYFVMWDLVTKRPITHIEIEGNSHIIAFWWVETTNVLYILSKDSMLRIFELDSSTQLSIDLVRKLSQANKTDHLQWTKIYEMPINTLNFANFIIEAEVKPTKDNKSYRLVCCHTDDSETIDIYQIIEDSTFKLKRPFNNINFPRFLKQQNFLGISKDSKFGIIMRFAKLNDVIFLGYENGFVVGFKITFDEGLQRDIAELVHVSNDHYPNPILDMCVSGDELYSCSTDDFITKYKIPVNLQLETKYLRDDALLIKCPSSLRVSEPSKVHLPLKNIGHIDKVKDDYLVVSSWSGMTIVYNMRTSEVEQTFVKSKNNLVVSDSSMGDLTNGSGSNTESSSKSHNYKVGAMTCLESFDVQSDGLRLGQLRRIKALAKCNWCLIGYEDGTIKLNKI.

WD repeat units follow at residues 23–67, 71–110, 258–295, and 318–359; these read YHKR…PITH, EGNS…QLSI, HYPN…QLET, and KVHL…VEQT. Residues 372-391 form a disordered region; that stretch reads SSMGDLTNGSGSNTESSSKS. Residues 378 to 391 are compositionally biased toward low complexity; the sequence is TNGSGSNTESSSKS.

Belongs to the WD repeat ASA1 family. Component of the ASTRA chromatin remodeling machinery complex composed of at least RVB1, RVB2, TRA1, TEL2, TTI1 and TTI2.

It localises to the nucleus. Its function is as follows. Component of the ASTRA complex involved in chromatin remodeling. The polypeptide is ASTRA-associated protein 1 (ASA1) (Saccharomyces cerevisiae (strain RM11-1a) (Baker's yeast)).